The chain runs to 335 residues: N-acetyl-gamma-glutamyl-phosphate reductase (335 aa).

Residue Cys147 is part of the active site.

Belongs to the NAGSA dehydrogenase family. Type 1 subfamily.

It is found in the cytoplasm. It catalyses the reaction N-acetyl-L-glutamate 5-semialdehyde + phosphate + NADP(+) = N-acetyl-L-glutamyl 5-phosphate + NADPH + H(+). Its pathway is amino-acid biosynthesis; L-arginine biosynthesis; N(2)-acetyl-L-ornithine from L-glutamate: step 3/4. Functionally, catalyzes the NADPH-dependent reduction of N-acetyl-5-glutamyl phosphate to yield N-acetyl-L-glutamate 5-semialdehyde. The protein is N-acetyl-gamma-glutamyl-phosphate reductase of Sulfurovum sp. (strain NBC37-1).